The chain runs to 243 residues: Tyrosine recombinase XerD-like (243 aa).

The Core-binding (CB) domain occupies 1 to 72; it reads MKQAIESFIQ…AVNQFLYFLY (72 aa). The 153-residue stretch at 91 to 243 folds into the Tyr recombinase domain; it reads SVKKKLERED…KTSMSLEKFR (153 aa). Catalysis depends on residues K149 and R210.

This sequence belongs to the 'phage' integrase family. XerD-like subfamily.

It localises to the cytoplasm. Putative tyrosine recombinase. Not involved in the cutting and rejoining of the recombining DNA molecules on dif(SL) site. This chain is Tyrosine recombinase XerD-like, found in Streptococcus suis (strain 98HAH33).